We begin with the raw amino-acid sequence, 148 residues long: UPF0756 membrane protein NMC1845 (148 aa).

The next 4 membrane-spanning stretches (helical) occupy residues 13 to 35 (LILL…LLLM), 50 to 70 (HGLN…LVSG), 80 to 100 (FLNF…WLAG), and 121 to 141 (VIGV…AGIL).

It belongs to the UPF0756 family.

The protein resides in the cell membrane. In Neisseria meningitidis serogroup C / serotype 2a (strain ATCC 700532 / DSM 15464 / FAM18), this protein is UPF0756 membrane protein NMC1845.